The following is a 150-amino-acid chain: UPF0178 protein HCH_06960 (150 aa).

It belongs to the UPF0178 family.

This chain is UPF0178 protein HCH_06960, found in Hahella chejuensis (strain KCTC 2396).